A 429-amino-acid polypeptide reads, in one-letter code: Adenylosuccinate synthetase (429 aa).

Residues 12-18 and 40-42 each bind GTP; these read GDEGKGK and GHT. The active-site Proton acceptor is aspartate 13. 2 residues coordinate Mg(2+): aspartate 13 and glycine 40. Residues 13 to 16, 38 to 41, threonine 129, arginine 143, glutamine 223, threonine 238, and arginine 302 contribute to the IMP site; these read DEGK and NAGH. Histidine 41 functions as the Proton donor in the catalytic mechanism. 298–304 provides a ligand contact to substrate; sequence TVTGRRR. GTP-binding positions include arginine 304, 330-332, and 412-414; these read KLD and STS.

It belongs to the adenylosuccinate synthetase family. Homodimer. Mg(2+) serves as cofactor.

The protein localises to the cytoplasm. The catalysed reaction is IMP + L-aspartate + GTP = N(6)-(1,2-dicarboxyethyl)-AMP + GDP + phosphate + 2 H(+). It functions in the pathway purine metabolism; AMP biosynthesis via de novo pathway; AMP from IMP: step 1/2. Its function is as follows. Plays an important role in the de novo pathway of purine nucleotide biosynthesis. Catalyzes the first committed step in the biosynthesis of AMP from IMP. This chain is Adenylosuccinate synthetase, found in Granulibacter bethesdensis (strain ATCC BAA-1260 / CGDNIH1).